The primary structure comprises 454 residues: Na(+)/H(+) antiporter NhaA (454 aa).

10 consecutive transmembrane segments (helical) span residues 22–42 (ISGL…NLPF), 64–84 (MGLG…TVGL), 106–126 (LCAV…ISLF), 150–170 (GWAV…ALFA), 190–210 (LLAI…YWFL), 228–248 (VPWL…FEAG), 284–304 (PFSA…VHFE), 306–326 (LTLA…LVVG), 355–375 (MFPA…IASL), and 386–406 (ARFG…ILLS).

This sequence belongs to the NhaA Na(+)/H(+) (TC 2.A.33) antiporter family.

The protein resides in the cell membrane. It catalyses the reaction Na(+)(in) + 2 H(+)(out) = Na(+)(out) + 2 H(+)(in). Functionally, na(+)/H(+) antiporter that extrudes sodium in exchange for external protons. The polypeptide is Na(+)/H(+) antiporter NhaA (Bifidobacterium adolescentis (strain ATCC 15703 / DSM 20083 / NCTC 11814 / E194a)).